The chain runs to 313 residues: Pyrimidine-specific ribonucleoside hydrolase RihB (313 aa).

Asp11 (proton acceptor) is an active-site residue. Ca(2+) is bound by residues Asp11, Asp16, and Val124. Gln227 and His239 together coordinate substrate. Asp240 contributes to the Ca(2+) binding site.

Belongs to the IUNH family. RihB subfamily. In terms of assembly, homotetramer. The cofactor is Ca(2+).

It catalyses the reaction a pyrimidine ribonucleoside + H2O = a pyrimidine nucleobase + D-ribose. Its function is as follows. Hydrolyzes cytidine or uridine to ribose and cytosine or uracil, respectively. Has a clear preference for cytidine over uridine. Strictly specific for ribonucleosides. In Escherichia coli (strain K12 / DH10B), this protein is Pyrimidine-specific ribonucleoside hydrolase RihB.